The primary structure comprises 167 residues: Cytochrome b6-f complex subunit 4 (167 aa).

3 helical membrane passes run 36–56, 95–115, and 131–151; these read LLYI…GLAV, LLGV…PFLE, and TVFL…TLPI.

The protein belongs to the cytochrome b family. PetD subfamily. In terms of assembly, the 4 large subunits of the cytochrome b6-f complex are cytochrome b6, subunit IV (17 kDa polypeptide, petD), cytochrome f and the Rieske protein, while the 4 small subunits are petG, petL, petM and petN. The complex functions as a dimer.

The protein localises to the plastid. It localises to the chloroplast thylakoid membrane. Its function is as follows. Component of the cytochrome b6-f complex, which mediates electron transfer between photosystem II (PSII) and photosystem I (PSI), cyclic electron flow around PSI, and state transitions. The chain is Cytochrome b6-f complex subunit 4 from Calycanthus floridus var. glaucus (Eastern sweetshrub).